The following is a 251-amino-acid chain: B3 domain-containing protein At2g24670 (251 aa).

The disordered stretch occupies residues Thr48–Gly111. Basic and acidic residues predominate over residues Ser56–Thr70. A DNA-binding region (TF-B3) is located at residues Val153–Tyr249.

The protein resides in the nucleus. The polypeptide is B3 domain-containing protein At2g24670 (Arabidopsis thaliana (Mouse-ear cress)).